Here is a 347-residue protein sequence, read N- to C-terminus: Histone deacetylase 11 (347 aa).

The histone deacetylase stretch occupies residues 14 to 326; it reads TRWPIVYSPR…LNLFGLGLIG (313 aa). His-143 is an active-site residue.

Belongs to the histone deacetylase family. As to quaternary structure, interacts with HDAC6. As to expression, weakly expressed in most tissues. Strongly expressed in brain, heart, skeletal muscle, kidney and testis.

Its subcellular location is the nucleus. It carries out the reaction N(6)-acetyl-L-lysyl-[histone] + H2O = L-lysyl-[histone] + acetate. Responsible for the deacetylation of lysine residues on the N-terminal part of the core histones (H2A, H2B, H3 and H4). Histone deacetylation gives a tag for epigenetic repression and plays an important role in transcriptional regulation, cell cycle progression and developmental events. Histone deacetylases act via the formation of large multiprotein complexes. The chain is Histone deacetylase 11 (HDAC11) from Homo sapiens (Human).